Consider the following 251-residue polypeptide: Large ribosomal subunit protein uL3 (251 aa).

Disordered regions lie at residues 140 to 162 (SHRS…NKKM) and 229 to 251 (AAPA…EENA). Q151 carries the post-translational modification N5-methylglutamine.

The protein belongs to the universal ribosomal protein uL3 family. In terms of assembly, part of the 50S ribosomal subunit. Forms a cluster with proteins L14 and L19. Post-translationally, methylated by PrmB.

One of the primary rRNA binding proteins, it binds directly near the 3'-end of the 23S rRNA, where it nucleates assembly of the 50S subunit. This chain is Large ribosomal subunit protein uL3, found in Methylobacterium nodulans (strain LMG 21967 / CNCM I-2342 / ORS 2060).